The sequence spans 802 residues: Copper-exporting P-type ATPase (802 aa).

HMA domains follow at residues 5-70 (KKTT…YGVA) and 72-138 (ETVE…YDAS). 4 residues coordinate Cu(+): C16, C19, C83, and C86. The next 6 membrane-spanning stretches (helical) occupy residues 161-181 (LIISAVLSLPLLMLMFVHLFN), 192-212 (WFQFILATPVQFIIGWQFYVG), 224-244 (MDVLVAVGTSAAYFYSIYEMV), 256-276 (LYFETSAVLITLILFGKYLEA), 411-431 (YFVPIVVGIALLTFIVWITLV), and 438-458 (PALVASISVLVIACPCALGLA). The active-site 4-aspartylphosphate intermediate is the D495. Residues D690 and D694 each contribute to the Mg(2+) site. The next 2 membrane-spanning stretches (helical) occupy residues 748 to 767 (LFWAFGYNIAGIPIAALGLL) and 771 to 790 (VAGAAMALSSVSVVTNALRL).

This sequence belongs to the cation transport ATPase (P-type) (TC 3.A.3) family. Type IB subfamily.

The protein resides in the cell membrane. It catalyses the reaction Cu(+)(in) + ATP + H2O = Cu(+)(out) + ADP + phosphate + H(+). Involved in copper export. In Staphylococcus aureus (strain MRSA252), this protein is Copper-exporting P-type ATPase (copA).